Reading from the N-terminus, the 1141-residue chain is Serine-aspartate repeat-containing protein E (1141 aa).

Residues 1-52 (MINRDNKKAITKKGMISNRLNKFSIRKYTVGTASILVGTTLIFGLGNQEAKA) form the signal peptide. Residues 23 to 34 (FSIRKYTVGTAS) carry the YSIRK-G/S signaling motif motif. Residues 53–601 (AENTSTENAK…GDGTVKPEEK (549 aa)) are ligand binding A region. The disordered stretch occupies residues 54-248 (ENTSTENAKQ…RSTKPVATAP (195 aa)). The segment covering 61 to 75 (AKQDDATTSDNKEVV) has biased composition (basic and acidic residues). The segment covering 77–90 (ETENNSTTENDSTN) has biased composition (low complexity). Over residues 92–108 (IKKETNTDSQPEAKEES) the composition is skewed to basic and acidic residues. Residues 109 to 126 (TTSSTQQQQNNVTATTET) are compositionally biased toward low complexity. Over residues 130 to 145 (NIEKENVKPSTDKTAT) the composition is skewed to basic and acidic residues. Residues 159–207 (NYTNNDVTTKPSTSEIQTKPTTPQESTNIENSQPQPTPSKVDNQVTDAT) are compositionally biased toward polar residues. Over residues 216 to 241 (SKEELKNNPEKLKELVRNDNNTDRST) the composition is skewed to basic and acidic residues. CNA-B domains lie at 602 to 714 (LYKI…YKEP), 715 to 824 (KYNL…YKTP), and 825 to 935 (KYSL…EEDT). The interval 899–1117 (VTNTTEDDKD…GSENNGSNNA (219 aa)) is disordered. Composition is skewed to acidic residues over residues 903–913 (TEDDKDADGGE) and 930–1080 (YFEE…DSDS). The LPXTG sorting signal signature appears at 1104 to 1108 (LPETG). Thr-1107 is modified (pentaglycyl murein peptidoglycan amidated threonine). The propeptide at 1108-1141 (GSENNGSNNATLFGGLFAALGSLLLFGRRKKQNK) is removed by sortase.

Belongs to the serine-aspartate repeat-containing protein (SDr) family. Interacts with host complement factor H/CFAH (via C-terminus). Interacts with host complement regulator C4BPA.

The protein resides in the secreted. It is found in the cell wall. Its function is as follows. Cell surface-associated calcium-binding protein which plays an important role in adhesion and pathogenesis. Contributes to the resistance to killing by innate immune components in blood and thus attenuates bacterial clearance by interacting with host complement factor H/CFAH and modulating its activity. Also inhibits bacterial opsonization and killing by interacting with host complement regulator C4BPA and thus inhibiting classical complement pathway activation. In Staphylococcus aureus (strain N315), this protein is Serine-aspartate repeat-containing protein E (sdrE).